Consider the following 267-residue polypeptide: Dihydropteroate synthase (267 aa).

The Pterin-binding domain maps to 1–251 (MTKTKIMGIL…NVELNAKLAK (251 aa)). Asn11 serves as a coordination point for Mg(2+). (7,8-dihydropterin-6-yl)methyl diphosphate is bound by residues Thr51, Asp84, Asn103, Asp167, Lys203, and 239 to 241 (RVH).

The protein belongs to the DHPS family. In terms of assembly, homodimer. Mg(2+) is required as a cofactor.

The catalysed reaction is (7,8-dihydropterin-6-yl)methyl diphosphate + 4-aminobenzoate = 7,8-dihydropteroate + diphosphate. Its pathway is cofactor biosynthesis; tetrahydrofolate biosynthesis; 7,8-dihydrofolate from 2-amino-4-hydroxy-6-hydroxymethyl-7,8-dihydropteridine diphosphate and 4-aminobenzoate: step 1/2. In terms of biological role, catalyzes the condensation of para-aminobenzoate (pABA) with 6-hydroxymethyl-7,8-dihydropterin diphosphate (DHPt-PP) to form 7,8-dihydropteroate (H2Pte), the immediate precursor of folate derivatives. This chain is Dihydropteroate synthase (folP), found in Staphylococcus aureus (strain Mu50 / ATCC 700699).